Consider the following 480-residue polypeptide: Oxysterol-binding protein-related protein 2 (480 aa).

Residues Met1–His60 form a disordered region. A compositionally biased stretch (polar residues) spans Asp15–Val30. Phosphoserine is present on residues Ser19 and Ser20. Residues Lys90, His178–His179, and Glu427–Arg431 contribute to the a 1,2-diacyl-sn-glycero-3-phospho-(1D-myo-inositol-4,5-bisphosphate) site.

The protein belongs to the OSBP family. Monomer. Homotetramer; phosphatidylinositol-4,5-bisphosphate binding promotes formation of stable tetramers. Interacts with DIAPH1. As to expression, widely expressed.

The protein resides in the cytoplasm. The protein localises to the cytosol. It is found in the lipid droplet. Its subcellular location is the cell membrane. Its function is as follows. Intracellular transport protein that binds sterols and phospholipids and mediates lipid transport between intracellular compartments. Increases plasma membrane cholesterol levels and decreases phosphatidylinositol-4,5-bisphosphate levels in the cell membrane. Binds phosphoinositides, such as phosphatidylinositol-4,5-bisphosphate. Exhibits strong binding to phosphatidic acid and weak binding to phosphatidylinositol 3-phosphate. Binds cholesterol, dehydroergosterol, 22(R)-hydroxycholesterol and 25-hydroxycholesterol (in vitro). This Homo sapiens (Human) protein is Oxysterol-binding protein-related protein 2 (OSBPL2).